The primary structure comprises 324 residues: D-alanine--D-alanine ligase (324 aa).

The 203-residue stretch at 120–322 (NNYLRGFGVE…LKEILTEIIE (203 aa)) folds into the ATP-grasp domain. Residue 149–204 (IDKLGLPLIVKPNDGGSSFGVTKVTNITQIQLAIRNAFNEGEGVLIESFIPGTEIT) participates in ATP binding. Mg(2+) contacts are provided by Asp-276, Glu-289, and Asn-291.

The protein belongs to the D-alanine--D-alanine ligase family. Mg(2+) is required as a cofactor. It depends on Mn(2+) as a cofactor.

It is found in the cytoplasm. The catalysed reaction is 2 D-alanine + ATP = D-alanyl-D-alanine + ADP + phosphate + H(+). It functions in the pathway cell wall biogenesis; peptidoglycan biosynthesis. In terms of biological role, cell wall formation. The chain is D-alanine--D-alanine ligase from Azobacteroides pseudotrichonymphae genomovar. CFP2.